The chain runs to 429 residues: Fumarylacetoacetase (429 aa).

Residue Asp-139 coordinates Ca(2+). The active-site Proton acceptor is His-146. A substrate-binding site is contributed by Arg-155. Ca(2+) contacts are provided by Glu-212, Glu-214, and Asp-246. Asp-246 is a binding site for Mg(2+). Substrate is bound at residue Gln-253. Mg(2+) contacts are provided by Lys-266 and Thr-270. Substrate is bound at residue Thr-363.

The protein belongs to the FAH family. The cofactor is Ca(2+). It depends on Mg(2+) as a cofactor.

It carries out the reaction 4-fumarylacetoacetate + H2O = acetoacetate + fumarate + H(+). It participates in amino-acid degradation; L-phenylalanine degradation; acetoacetate and fumarate from L-phenylalanine: step 6/6. Functionally, converts fumarylacetoacetate to acetoacetate and fumarate. Involved in tyrosine catabolic pathway. Catalyzes the final step in the tyrosine degradation pathway. This is Fumarylacetoacetase from Oryza sativa subsp. japonica (Rice).